Reading from the N-terminus, the 308-residue chain is MLPPYFLFKEMTDTQYIGRFAPSPSGELHFGSLIAALGSYLQARARQGRWLVRIEDIDPPREVPGAAETILRQLEHYGLHWDGDVLWQSQRHDAYREALAWLHEQGLSYYCTCTRARIQSIGGIYDGHCRVLHHGPDNAAVRIRQQHPVTQFTDLLRGIIHADEKLAREDFIIHRRDGLFAYNLAVVVDDHFQGVTEIVRGADLIEPTVRQIPLYQLFGWKVPDYIHLPLALNPQGAKLSKQNHAPALPKGDPRPVLIAALQFLGQQAEAHWQDFSVEQILQSAVKNWMLTAVPESAIVNSTFSNASC.

Residues 19-23 (RFAPS) and glutamate 55 contribute to the L-glutamate site. The 'HIGH' region motif lies at 22 to 32 (PSPSGELHFGS). The Zn(2+) site is built by cysteine 111, cysteine 113, tyrosine 125, and cysteine 129. Tyrosine 182 and arginine 200 together coordinate L-glutamate. The 'KMSKS' region motif lies at 238–242 (KLSKQ). Lysine 241 provides a ligand contact to ATP.

This sequence belongs to the class-I aminoacyl-tRNA synthetase family. GluQ subfamily. Zn(2+) serves as cofactor.

In terms of biological role, catalyzes the tRNA-independent activation of glutamate in presence of ATP and the subsequent transfer of glutamate onto a tRNA(Asp). Glutamate is transferred on the 2-amino-5-(4,5-dihydroxy-2-cyclopenten-1-yl) moiety of the queuosine in the wobble position of the QUC anticodon. The polypeptide is Glutamyl-Q tRNA(Asp) synthetase (Shigella flexneri).